Consider the following 133-residue polypeptide: L-cystatin (133 aa).

An N-terminal signal peptide occupies residues 1 to 19 (MEGYNILAVLIILVGVSMG). A Pyrrolidone carboxylic acid modification is found at Gln20. The Secondary area of contact motif lies at 67-71 (QVVSG). Cystine bridges form between Cys85–Cys98 and Cys109–Cys129.

Belongs to the cystatin family. In terms of tissue distribution, expressed in hemocytes and slightly in heart.

Its subcellular location is the cytoplasmic granule. Tight-binding inhibitor for papain. It has an important role in the protection of cells, antimicrobial activity against Gram-negative bacteria, defense against invading microbes, and response to external stimuli. This chain is L-cystatin, found in Tachypleus tridentatus (Japanese horseshoe crab).